The chain runs to 158 residues: MQGTLSVWLAKRGLIHRSLGFDYQGIETLQIKPEDWHAIAVILYVYGYNYLRLQCAYDVAPGGLLASVYHLTRIEYGVNQAEEVCIKVFTQRSNPRIPSVFWVWKSTDFQERESYDMLGITYDSHPRLKRILMPESWMGWPLRKDYIAPNFYEIQDAY.

The protein belongs to the complex I 30 kDa subunit family. In terms of assembly, NDH is composed of at least 16 different subunits, 5 of which are encoded in the nucleus.

The protein localises to the plastid. Its subcellular location is the chloroplast thylakoid membrane. The enzyme catalyses a plastoquinone + NADH + (n+1) H(+)(in) = a plastoquinol + NAD(+) + n H(+)(out). The catalysed reaction is a plastoquinone + NADPH + (n+1) H(+)(in) = a plastoquinol + NADP(+) + n H(+)(out). NDH shuttles electrons from NAD(P)H:plastoquinone, via FMN and iron-sulfur (Fe-S) centers, to quinones in the photosynthetic chain and possibly in a chloroplast respiratory chain. The immediate electron acceptor for the enzyme in this species is believed to be plastoquinone. Couples the redox reaction to proton translocation, and thus conserves the redox energy in a proton gradient. The sequence is that of NAD(P)H-quinone oxidoreductase subunit J, chloroplastic from Draba nemorosa (Woodland whitlowgrass).